Consider the following 247-residue polypeptide: 14-3-3 protein gamma-A (247 aa).

It belongs to the 14-3-3 family. Homodimer, and heterodimer with other family members.

It is found in the cytoplasm. In terms of biological role, adapter protein implicated in the regulation of a large spectrum of both general and specialized signaling pathways. Binds to a large number of partners, usually by recognition of a phosphoserine or phosphothreonine motif. Binding generally results in the modulation of the activity of the binding partner. The chain is 14-3-3 protein gamma-A (ywhag-a) from Xenopus laevis (African clawed frog).